We begin with the raw amino-acid sequence, 918 residues long: Leucine--tRNA ligase (918 aa).

The 'HIGH' region motif lies at 40 to 51; it reads PYPSGVGLHVGH. The 'KMSKS' region motif lies at 692–696; it reads KMSKS. K695 contacts ATP.

It belongs to the class-I aminoacyl-tRNA synthetase family.

It localises to the cytoplasm. It carries out the reaction tRNA(Leu) + L-leucine + ATP = L-leucyl-tRNA(Leu) + AMP + diphosphate. The protein is Leucine--tRNA ligase of Azobacteroides pseudotrichonymphae genomovar. CFP2.